The sequence spans 561 residues: Putative cuticle collagen 145 (561 aa).

An N-terminal signal peptide occupies residues 1–30; it reads MEKILVTLSTGAASIAVLAVLFTIPSLYNT. Residues 100-112 are compositionally biased toward pro residues; it reads TCPPGPPGPPGQP. 4 disordered regions span residues 100–134, 148–271, 367–398, and 422–540; these read TCPP…TYAP, PQGP…PGGP, TCPP…NTAT, and TGPA…GPGL. Triple-helical region stretches follow at residues 102–127 and 153–276; these read PPGP…KGED and GPEG…LPGN. Low complexity-rich tracts occupy residues 164–209 and 219–265; these read AGPD…PGQD and APGA…DGQP. The segment covering 367–379 has biased composition (pro residues); sequence TCPPGPPGPPGQP. The tract at residues 413 to 544 is triple-helical region; that stretch reads KCPQGPAGPT…PGGPGLPGND (132 aa). Low complexity-rich tracts occupy residues 422 to 467 and 486 to 532; these read TGPA…PGQD and APGA…DGQP. The Collagen-like domain maps to 485–543; it reads GAPGAPGNAGPAGPAGQDGFPGQDGQPGPAGPAGQDGFPGNAGSDGQPGAPGGPGLPGN.

Belongs to the cuticular collagen family. Collagen polypeptide chains are complexed within the cuticle by disulfide bonds and other types of covalent cross-links.

In terms of biological role, nematode cuticles are composed largely of collagen-like proteins. The cuticle functions both as an exoskeleton and as a barrier to protect the worm from its environment. The protein is Putative cuticle collagen 145 of Caenorhabditis briggsae.